We begin with the raw amino-acid sequence, 139 residues long: Transcription antitermination protein NusB (139 aa).

Belongs to the NusB family.

Its function is as follows. Involved in transcription antitermination. Required for transcription of ribosomal RNA (rRNA) genes. Binds specifically to the boxA antiterminator sequence of the ribosomal RNA (rrn) operons. The sequence is that of Transcription antitermination protein NusB from Rubrobacter xylanophilus (strain DSM 9941 / JCM 11954 / NBRC 16129 / PRD-1).